The chain runs to 205 residues: Thiamine-phosphate synthase (205 aa).

4-amino-2-methyl-5-(diphosphooxymethyl)pyrimidine is bound by residues 35 to 39 (QYRDK) and N67. Mg(2+) is bound by residues D68 and D86. A 4-amino-2-methyl-5-(diphosphooxymethyl)pyrimidine-binding site is contributed by T105. 132 to 134 (SLT) serves as a coordination point for 2-[(2R,5Z)-2-carboxy-4-methylthiazol-5(2H)-ylidene]ethyl phosphate. A 4-amino-2-methyl-5-(diphosphooxymethyl)pyrimidine-binding site is contributed by K135. G162 lines the 2-[(2R,5Z)-2-carboxy-4-methylthiazol-5(2H)-ylidene]ethyl phosphate pocket.

It belongs to the thiamine-phosphate synthase family. Requires Mg(2+) as cofactor.

It carries out the reaction 2-[(2R,5Z)-2-carboxy-4-methylthiazol-5(2H)-ylidene]ethyl phosphate + 4-amino-2-methyl-5-(diphosphooxymethyl)pyrimidine + 2 H(+) = thiamine phosphate + CO2 + diphosphate. It catalyses the reaction 2-(2-carboxy-4-methylthiazol-5-yl)ethyl phosphate + 4-amino-2-methyl-5-(diphosphooxymethyl)pyrimidine + 2 H(+) = thiamine phosphate + CO2 + diphosphate. The catalysed reaction is 4-methyl-5-(2-phosphooxyethyl)-thiazole + 4-amino-2-methyl-5-(diphosphooxymethyl)pyrimidine + H(+) = thiamine phosphate + diphosphate. Its pathway is cofactor biosynthesis; thiamine diphosphate biosynthesis; thiamine phosphate from 4-amino-2-methyl-5-diphosphomethylpyrimidine and 4-methyl-5-(2-phosphoethyl)-thiazole: step 1/1. Functionally, condenses 4-methyl-5-(beta-hydroxyethyl)thiazole monophosphate (THZ-P) and 2-methyl-4-amino-5-hydroxymethyl pyrimidine pyrophosphate (HMP-PP) to form thiamine monophosphate (TMP). The protein is Thiamine-phosphate synthase of Pseudomonas syringae pv. syringae (strain B728a).